An 873-amino-acid polypeptide reads, in one-letter code: Alanine--tRNA ligase (873 aa).

Residues histidine 563, histidine 567, cysteine 664, and histidine 668 each coordinate Zn(2+).

The protein belongs to the class-II aminoacyl-tRNA synthetase family. It depends on Zn(2+) as a cofactor.

The protein resides in the cytoplasm. The catalysed reaction is tRNA(Ala) + L-alanine + ATP = L-alanyl-tRNA(Ala) + AMP + diphosphate. Functionally, catalyzes the attachment of alanine to tRNA(Ala) in a two-step reaction: alanine is first activated by ATP to form Ala-AMP and then transferred to the acceptor end of tRNA(Ala). Also edits incorrectly charged Ser-tRNA(Ala) and Gly-tRNA(Ala) via its editing domain. The sequence is that of Alanine--tRNA ligase from Aromatoleum aromaticum (strain DSM 19018 / LMG 30748 / EbN1) (Azoarcus sp. (strain EbN1)).